The chain runs to 377 residues: Prostaglandin reductase-3 (377 aa).

At Lys35 the chain carries N6-acetyllysine. 7 residues coordinate NADP(+): Thr185, Ser205, Lys209, Tyr224, Ser247, Ile269, and Tyr275. Residue Ser299 is modified to Phosphoserine. NADP(+) is bound by residues 303–305 and Asn361; that span reads FFL.

Belongs to the zinc-containing alcohol dehydrogenase family. Quinone oxidoreductase subfamily. In terms of tissue distribution, widely expressed.

The protein resides in the peroxisome. It catalyses the reaction 13,14-dihydro-15-oxo-prostaglandin E2 + NADP(+) = 15-oxoprostaglandin E2 + NADPH + H(+). The catalysed reaction is 13,14-dihydro-15-oxo-prostaglandin E1 + NADP(+) = 15-oxoprostaglandin E1 + NADPH + H(+). It carries out the reaction 13,14-dihydro-15-oxo-PGF2alpha + NADP(+) = 15-oxoprostaglandin F2alpha + NADPH + H(+). The enzyme catalyses 13,14-dihydro-15-oxo-prostaglandin F1alpha + NADP(+) = 15-oxoprostaglandin F1alpha + NADPH + H(+). In terms of biological role, functions as 15-oxo-prostaglandin 13-reductase and acts on 15-keto-PGE1, 15-keto-PGE2, 15-keto-PGE1-alpha and 15-keto-PGE2-alpha with highest efficiency towards 15-keto-PGE2-alpha. Overexpression represses transcriptional activity of PPARG and inhibits adipocyte differentiation. The polypeptide is Prostaglandin reductase-3 (Mus musculus (Mouse)).